The following is a 483-amino-acid chain: UDP-N-acetylmuramoyl-L-alanyl-D-glutamate--2,6-diaminopimelate ligase (483 aa).

Residue serine 30 participates in UDP-N-acetyl-alpha-D-muramoyl-L-alanyl-D-glutamate binding. ATP is bound at residue 109–115 (GTNGKTT). UDP-N-acetyl-alpha-D-muramoyl-L-alanyl-D-glutamate-binding positions include 151–152 (TT), serine 178, and arginine 186. Lysine 218 carries the post-translational modification N6-carboxylysine. Residues arginine 380, 403 to 406 (DNPR), glycine 453, and glutamate 457 each bind meso-2,6-diaminopimelate. The Meso-diaminopimelate recognition motif motif lies at 403-406 (DNPR).

It belongs to the MurCDEF family. MurE subfamily. The cofactor is Mg(2+). Carboxylation is probably crucial for Mg(2+) binding and, consequently, for the gamma-phosphate positioning of ATP.

The protein resides in the cytoplasm. It catalyses the reaction UDP-N-acetyl-alpha-D-muramoyl-L-alanyl-D-glutamate + meso-2,6-diaminopimelate + ATP = UDP-N-acetyl-alpha-D-muramoyl-L-alanyl-gamma-D-glutamyl-meso-2,6-diaminopimelate + ADP + phosphate + H(+). Its pathway is cell wall biogenesis; peptidoglycan biosynthesis. Functionally, catalyzes the addition of meso-diaminopimelic acid to the nucleotide precursor UDP-N-acetylmuramoyl-L-alanyl-D-glutamate (UMAG) in the biosynthesis of bacterial cell-wall peptidoglycan. The sequence is that of UDP-N-acetylmuramoyl-L-alanyl-D-glutamate--2,6-diaminopimelate ligase from Chlamydia trachomatis serovar A (strain ATCC VR-571B / DSM 19440 / HAR-13).